A 235-amino-acid polypeptide reads, in one-letter code: Post-translational flagellin modification protein B (235 aa).

It belongs to the CMP-NeuNAc synthase family.

Its function is as follows. Required for biosynthesis of LAH modification in the post-translational modification of Campylobacter coli flagellin. The protein is Post-translational flagellin modification protein B (ptmB) of Campylobacter coli.